Consider the following 357-residue polypeptide: Fructose-bisphosphate aldolase, cytoplasmic isozyme 1 (357 aa).

2 residues coordinate substrate: Arg-52 and Lys-142. Glu-183 serves as the catalytic Proton acceptor. The active-site Schiff-base intermediate with dihydroxyacetone-P is Lys-225.

The protein belongs to the class I fructose-bisphosphate aldolase family.

It is found in the cytoplasm. The catalysed reaction is beta-D-fructose 1,6-bisphosphate = D-glyceraldehyde 3-phosphate + dihydroxyacetone phosphate. It functions in the pathway carbohydrate degradation; glycolysis; D-glyceraldehyde 3-phosphate and glycerone phosphate from D-glucose: step 4/4. The polypeptide is Fructose-bisphosphate aldolase, cytoplasmic isozyme 1 (Pisum sativum (Garden pea)).